The primary structure comprises 178 residues: Alkyl hydroperoxide reductase AhpD (178 aa).

C130 (proton donor) is an active-site residue. The cysteines at positions 130 and 133 are disulfide-linked. The Cysteine sulfenic acid (-SOH) intermediate role is filled by C133.

It belongs to the AhpD family. As to quaternary structure, homotrimer.

The catalysed reaction is N(6)-[(R)-dihydrolipoyl]-L-lysyl-[lipoyl-carrier protein] + a hydroperoxide = N(6)-[(R)-lipoyl]-L-lysyl-[lipoyl-carrier protein] + an alcohol + H2O. Functionally, antioxidant protein with alkyl hydroperoxidase activity. Required for the reduction of the AhpC active site cysteine residues and for the regeneration of the AhpC enzyme activity. In Mycobacterium marinum (strain ATCC BAA-535 / M), this protein is Alkyl hydroperoxide reductase AhpD.